Here is a 93-residue protein sequence, read N- to C-terminus: uncharacterized protein (93 aa).

An N-terminal signal peptide occupies residues 1-22 (MNKYWLSGIIFLAYGLASPAFS).

This is an uncharacterized protein from Escherichia coli (strain K12).